A 235-amino-acid polypeptide reads, in one-letter code: Probable transcriptional regulatory protein CJJ81176_1187 (235 aa).

It belongs to the TACO1 family.

Its subcellular location is the cytoplasm. In Campylobacter jejuni subsp. jejuni serotype O:23/36 (strain 81-176), this protein is Probable transcriptional regulatory protein CJJ81176_1187.